The chain runs to 355 residues: Anthranilate phosphoribosyltransferase (355 aa).

5-phospho-alpha-D-ribose 1-diphosphate contacts are provided by residues Gly99, 102-103, Thr107, 109-112, 127-135, and Ser139; these read GD, NIST, and KHGNRSVSS. Residue Gly99 participates in anthranilate binding. Ser111 is a Mg(2+) binding site. Asn130 is an anthranilate binding site. Arg185 contributes to the anthranilate binding site. Mg(2+) contacts are provided by Asp243 and Glu244.

Belongs to the anthranilate phosphoribosyltransferase family. In terms of assembly, homodimer. Requires Mg(2+) as cofactor.

It carries out the reaction N-(5-phospho-beta-D-ribosyl)anthranilate + diphosphate = 5-phospho-alpha-D-ribose 1-diphosphate + anthranilate. It functions in the pathway amino-acid biosynthesis; L-tryptophan biosynthesis; L-tryptophan from chorismate: step 2/5. Functionally, catalyzes the transfer of the phosphoribosyl group of 5-phosphorylribose-1-pyrophosphate (PRPP) to anthranilate to yield N-(5'-phosphoribosyl)-anthranilate (PRA). The sequence is that of Anthranilate phosphoribosyltransferase from Pseudoalteromonas translucida (strain TAC 125).